The sequence spans 181 residues: Shikimate kinase 2 (181 aa).

12–17 contributes to the ATP binding site; sequence GCGKTT. The Mg(2+) site is built by Thr-16 and Asp-32. Residues Asp-34, Arg-58, and Gly-79 each coordinate substrate. The segment at 112-126 is LID domain; it reads EAEPEAELRPTLTGK. Arg-120 lines the ATP pocket. Position 139 (Arg-139) interacts with substrate.

The protein belongs to the shikimate kinase family. AroL subfamily. Monomer. Mg(2+) serves as cofactor.

It localises to the cytoplasm. The enzyme catalyses shikimate + ATP = 3-phosphoshikimate + ADP + H(+). It functions in the pathway metabolic intermediate biosynthesis; chorismate biosynthesis; chorismate from D-erythrose 4-phosphate and phosphoenolpyruvate: step 5/7. In terms of biological role, catalyzes the specific phosphorylation of the 3-hydroxyl group of shikimic acid using ATP as a cosubstrate. This is Shikimate kinase 2 from Salmonella schwarzengrund (strain CVM19633).